The following is a 368-amino-acid chain: Serine/threonine-protein phosphatase PP2A-like PPG1 (368 aa).

4 residues coordinate Mn(2+): Asp-50, His-52, Asp-78, and Asn-110. His-111 acts as the Proton donor in catalysis. The Mn(2+) site is built by His-161 and His-247.

It belongs to the PPP phosphatase family. PP-2A subfamily. In terms of assembly, inactivated in a complex with phosphatase methylesterase PPE1 (PP2Ai). Interacts with phosphatase 2A activator RRD1, which can reactivate PP2Ai by dissociating the catalytic subunit from the complex. Interacts with TAP42. It depends on Mn(2+) as a cofactor. Reversibly methyl esterified on Leu-368 by leucine carboxyl methyltransferase 1 (PPM1) and protein phosphatase methylesterase 1 (PPE1). Carboxyl methylation influences the affinity of the catalytic subunit for the different regulatory subunits, thereby modulating the PP2A holoenzyme's substrate specificity, enzyme activity and cellular localization.

The catalysed reaction is O-phospho-L-seryl-[protein] + H2O = L-seryl-[protein] + phosphate. It carries out the reaction O-phospho-L-threonyl-[protein] + H2O = L-threonyl-[protein] + phosphate. Its function is as follows. Involved in glycogen accumulation. The polypeptide is Serine/threonine-protein phosphatase PP2A-like PPG1 (PPG1) (Saccharomyces cerevisiae (strain ATCC 204508 / S288c) (Baker's yeast)).